The chain runs to 131 residues: UPF0102 protein YraN (131 aa).

A compositionally biased stretch (polar residues) spans 1–19 (MATVPTRSGSPRQLTTKQT). Residues 1 to 21 (MATVPTRSGSPRQLTTKQTGD) form a disordered region.

Belongs to the UPF0102 family.

The polypeptide is UPF0102 protein YraN (Escherichia coli O127:H6 (strain E2348/69 / EPEC)).